The chain runs to 430 residues: ATP-dependent RNA helicase cgh-1 (430 aa).

Positions 43 to 71 (VEFEDFCLGRDLLMGIFEKGWEKPSPIQE) match the Q motif motif. The 171-residue stretch at 74–244 (IGVALTGQDI…QKHMHKPYEI (171 aa)) folds into the Helicase ATP-binding domain. Position 87–94 (87–94 (AKNGTGKT)) interacts with ATP. A DEAD box motif is present at residues 192–195 (DEAD). One can recognise a Helicase C-terminal domain in the interval 254-414 (GVTQYYAFVQ…PIPKTVDPKL (161 aa)).

This sequence belongs to the DEAD box helicase family. DDX6/DHH1 subfamily. In terms of assembly, interacts with car-1 in a germline ribonucleoprotein complex. Interacts with ifet-1. Interacts with oma-1, which is a component of a ribonucleoprotein complex, in an RNA-dependent manner. Expression is restricted to two germline precursors Z2 and Z3 in L1 stage hermaphrodites, and is detectable specifically in the gonad at low levels into the L3 stage. Expression is significantly higher during the early L4 stage. In adults, expression remains gonad-specific and was not apparent in the somatically derived uterus. Expressed in germ granules (P granules); when associated with pgl-1.

Its subcellular location is the cytoplasm. It carries out the reaction ATP + H2O = ADP + phosphate + H(+). Probable RNA helicase required for oocyte and sperm function. Also required to prevent the physiological germline apoptosis mechanism killing essentially all developing oocytes. The sequence is that of ATP-dependent RNA helicase cgh-1 (cgh-1) from Caenorhabditis elegans.